A 212-amino-acid polypeptide reads, in one-letter code: Thymidylate kinase (212 aa).

Residue 11–18 (GIEGSGKT) coordinates ATP.

It belongs to the thymidylate kinase family.

It catalyses the reaction dTMP + ATP = dTDP + ADP. Phosphorylation of dTMP to form dTDP in both de novo and salvage pathways of dTTP synthesis. This Buchnera aphidicola subsp. Baizongia pistaciae (strain Bp) protein is Thymidylate kinase.